A 469-amino-acid chain; its full sequence is Adenosylhomocysteinase (469 aa).

Positions 58, 133, and 195 each coordinate substrate. Thr196 to Thr198 serves as a coordination point for NAD(+). Substrate is bound by residues Lys225 and Asp229. NAD(+)-binding positions include Asn230, Gly259–Gly264, Glu282, Asn317, Ile338–His340, and Asn383.

Belongs to the adenosylhomocysteinase family. Requires NAD(+) as cofactor.

The protein localises to the cytoplasm. It carries out the reaction S-adenosyl-L-homocysteine + H2O = L-homocysteine + adenosine. The protein operates within amino-acid biosynthesis; L-homocysteine biosynthesis; L-homocysteine from S-adenosyl-L-homocysteine: step 1/1. May play a key role in the regulation of the intracellular concentration of adenosylhomocysteine. The chain is Adenosylhomocysteinase from Rhodopseudomonas palustris (strain TIE-1).